The primary structure comprises 211 residues: Uracil phosphoribosyltransferase (211 aa).

5-phospho-alpha-D-ribose 1-diphosphate-binding positions include Arg79, Arg104, and Asp131–Ser139. Uracil contacts are provided by residues Ile196 and Gly201–Ala203. Asp202 provides a ligand contact to 5-phospho-alpha-D-ribose 1-diphosphate.

This sequence belongs to the UPRTase family. Requires Mg(2+) as cofactor.

The enzyme catalyses UMP + diphosphate = 5-phospho-alpha-D-ribose 1-diphosphate + uracil. Its pathway is pyrimidine metabolism; UMP biosynthesis via salvage pathway; UMP from uracil: step 1/1. With respect to regulation, allosterically activated by GTP. Functionally, catalyzes the conversion of uracil and 5-phospho-alpha-D-ribose 1-diphosphate (PRPP) to UMP and diphosphate. The protein is Uracil phosphoribosyltransferase of Lactococcus lactis subsp. cremoris (strain MG1363).